Reading from the N-terminus, the 717-residue chain is Proline-rich receptor-like protein kinase PERK2 (717 aa).

The segment covering 1 to 197 (MSSAPPPGGT…GSLSPPPPAS (197 aa)) has biased composition (pro residues). Residues 1–221 (MSSAPPPGGT…GSSPPAQSSK (221 aa)) form a disordered region. The Extracellular segment spans residues 1 to 228 (MSSAPPPGGT…SSKELSKGAM (228 aa)). A compositionally biased stretch (low complexity) spans 198–220 (PSGGRSPSTPSTTPGSSPPAQSS). A helical transmembrane segment spans residues 229 to 249 (VGIAIGGGFVLLVALALIFFL). Residues 250 to 717 (CKKKRRRDNE…NIKRPGQGYG (468 aa)) lie on the Cytoplasmic side of the membrane. Residues 258 to 323 (NEAPPAPIDG…YDSNYSDQSV (66 aa)) form a disordered region. A compositionally biased stretch (pro residues) spans 289–303 (VPPPKSPSSAPPRPP). Residues 307–322 (SSGSSGDYDSNYSDQS) show a composition bias toward low complexity. Residues 354 to 631 (FSEANLLGQG…QVARVLEGNI (278 aa)) form the Protein kinase domain. ATP is bound by residues 360 to 368 (LGQGGFGYV) and Lys382. Asp478 acts as the Proton acceptor in catalysis. 2 stretches are compositionally biased toward polar residues: residues 632–644 (SPSD…TPGH) and 692–705 (SWSS…QGKA). 2 disordered regions span residues 632 to 665 (SPSD…DNEG) and 690 to 717 (YPSW…QGYG).

The protein belongs to the protein kinase superfamily. Ser/Thr protein kinase family. In terms of tissue distribution, mostly expressed in inflorescence bolt, flower buds and siliques, and, to a lower extent, in roots, seedlings and leaves.

It localises to the cell membrane. The enzyme catalyses L-seryl-[protein] + ATP = O-phospho-L-seryl-[protein] + ADP + H(+). It carries out the reaction L-threonyl-[protein] + ATP = O-phospho-L-threonyl-[protein] + ADP + H(+). In Arabidopsis thaliana (Mouse-ear cress), this protein is Proline-rich receptor-like protein kinase PERK2 (PERK2).